A 187-amino-acid chain; its full sequence is Calmodulin-like protein 30 (187 aa).

Residues 21-47 (KPSRMFSRDRQSSGLSSPGPGGFSQPS) form a disordered region. Low complexity predominate over residues 32 to 47 (SSGLSSPGPGGFSQPS). 4 consecutive EF-hand domains span residues 46–81 (PSVN…LGQE), 82–117 (RAIE…SGGI), 129–152 (FDLN…LGER), and 153–187 (CSLE…SNNV). Residues aspartate 59, aspartate 61, aspartate 63, lysine 65, glutamate 70, aspartate 95, aspartate 97, aspartate 99, glutamate 106, aspartate 130, asparagine 132, aspartate 134, lysine 136, glutamate 141, aspartate 166, aspartate 168, aspartate 170, and glutamate 177 each contribute to the Ca(2+) site.

The protein belongs to the calmodulin family.

Its function is as follows. Potential calcium sensor. The sequence is that of Calmodulin-like protein 30 from Arabidopsis thaliana (Mouse-ear cress).